The chain runs to 429 residues: Adenylosuccinate synthetase (429 aa).

Residues 12-18 (GDEGKGK) and 40-42 (GHT) each bind GTP. Asp13 acts as the Proton acceptor in catalysis. Mg(2+)-binding residues include Asp13 and Gly40. IMP is bound by residues 13-16 (DEGK), 38-41 (NAGH), Thr128, Arg142, Gln223, Thr238, and Arg302. Residue His41 is the Proton donor of the active site. 298-304 (TVTGRPR) contributes to the substrate binding site. GTP is bound by residues Arg304, 330–332 (LLD), and 412–414 (SVG).

It belongs to the adenylosuccinate synthetase family. In terms of assembly, homodimer. Mg(2+) serves as cofactor.

It is found in the cytoplasm. It carries out the reaction IMP + L-aspartate + GTP = N(6)-(1,2-dicarboxyethyl)-AMP + GDP + phosphate + 2 H(+). It functions in the pathway purine metabolism; AMP biosynthesis via de novo pathway; AMP from IMP: step 1/2. Its function is as follows. Plays an important role in the de novo pathway of purine nucleotide biosynthesis. Catalyzes the first committed step in the biosynthesis of AMP from IMP. The chain is Adenylosuccinate synthetase from Limosilactobacillus fermentum (strain NBRC 3956 / LMG 18251) (Lactobacillus fermentum).